A 107-amino-acid polypeptide reads, in one-letter code: MTKSELVAQLASRFPQLVLKDADFAVKTMLDAMSDALSKGHRIEIRGFGSFGLNRRPARVGRNPKSGEKVQVPEKHVPHFKPGKELRERVDGRAGEPLKNDEPEDGQ.

The interval Asn54–Gln107 is disordered. Basic and acidic residues predominate over residues Lys65–Asp101.

It belongs to the bacterial histone-like protein family. As to quaternary structure, heterodimer of an alpha and a beta chain.

This protein is one of the two subunits of integration host factor, a specific DNA-binding protein that functions in genetic recombination as well as in transcriptional and translational control. This Burkholderia thailandensis (strain ATCC 700388 / DSM 13276 / CCUG 48851 / CIP 106301 / E264) protein is Integration host factor subunit beta.